The primary structure comprises 713 residues: Pro-neuregulin-3, membrane-bound isoform (713 aa).

Topologically, residues 1–362 (MSEGAAGASP…MESEDVYQRQ (362 aa)) are extracellular. Disordered regions lie at residues 28–48 (AAAA…AAEP), 119–220 (SSFP…STQA), and 251–282 (AAAS…TTYS). Residues 34–44 (AGGGPDGGGEG) are compositionally biased toward gly residues. Residues 127–148 (TTTTTTSTTSPATPSAGGAASS) show a composition bias toward low complexity. Over residues 149-163 (RTPNRISTRLTTITR) the composition is skewed to polar residues. Low complexity-rich tracts occupy residues 195–207 (STTA…STPG) and 254–274 (SSSS…STSP). The EGF-like domain maps to 288–331 (HFKPCRDKDLAYCLNDGECFVIETLTGSHKHCRCKEGYQGVRCD). 3 disulfides stabilise this stretch: Cys292-Cys306, Cys300-Cys319, and Cys321-Cys330. A helical transmembrane segment spans residues 363 to 383 (VLSISCIIFGIVIVGMFCAAF). The Cytoplasmic portion of the chain corresponds to 384 to 713 (YFKSKKQAKQ…EIQRDSVLTK (330 aa)). Residues 449-496 (SAPQSFPEVTSPDRGSQPIKHHSPGQRSGMLHRNTFRRAPPSPRSRLG) are disordered.

This sequence belongs to the neuregulin family. In terms of assembly, interacts with ERBB4. In terms of processing, proteolytic cleavage close to the plasma membrane on the external face leads to the release of the soluble growth factor form. Post-translationally, extensive glycosylation precedes the proteolytic cleavage. In terms of tissue distribution, expressed in sympathetic, motor, and sensory neurons.

The protein localises to the cell membrane. It is found in the secreted. In terms of biological role, direct ligand for the ERBB4 tyrosine kinase receptor. Binding results in ligand-stimulated tyrosine phosphorylation and activation of the receptor. Does not bind to the EGF receptor, ERBB2 or ERBB3 receptors. The chain is Pro-neuregulin-3, membrane-bound isoform (Nrg3) from Mus musculus (Mouse).